Consider the following 126-residue polypeptide: VLPEEIFFTISIVGVLENLIVLLAVFKNKNLQAPMYFFICSLAISDMLGSLYKILENILIILRNMGYLKPRGSFETTADDIIDSLFVLSLLGAIFSLSVIAADRYITIFHALRYHSIVTMRRTVVV.

Residues 1 to 25 (VLPEEIFFTISIVGVLENLIVLLAV) traverse the membrane as a helical segment. Residues 26 to 34 (FKNKNLQAP) lie on the Cytoplasmic side of the membrane. A helical transmembrane segment spans residues 35–55 (MYFFICSLAISDMLGSLYKIL). Residues 56–80 (ENILIILRNMGYLKPRGSFETTADD) lie on the Extracellular side of the membrane. A helical membrane pass occupies residues 81–102 (IIDSLFVLSLLGAIFSLSVIAA). Residues 103–123 (DRYITIFHALRYHSIVTMRRT) lie on the Cytoplasmic side of the membrane. A helical membrane pass occupies residues 124–126 (VVV).

It belongs to the G-protein coupled receptor 1 family. As to quaternary structure, interacts with MRAP; increasing ligand-sensitivity and generation of cAMP. Interacts with MRAP2; competing with MRAP for binding to MC2R and impairing the binding of corticotropin (ACTH).

Its subcellular location is the cell membrane. Receptor for corticotropin (ACTH). This receptor is mediated by G proteins (G(s)) which activate adenylate cyclase (cAMP). In Papio hamadryas (Hamadryas baboon), this protein is Adrenocorticotropic hormone receptor (MC2R).